An 88-amino-acid polypeptide reads, in one-letter code: Small ribosomal subunit protein bS20 (88 aa).

Belongs to the bacterial ribosomal protein bS20 family.

Functionally, binds directly to 16S ribosomal RNA. The chain is Small ribosomal subunit protein bS20 from Clostridium botulinum (strain 657 / Type Ba4).